We begin with the raw amino-acid sequence, 246 residues long: Pyridoxine 5'-phosphate synthase (246 aa).

A 3-amino-2-oxopropyl phosphate-binding site is contributed by N12. Position 14–15 (14–15) interacts with 1-deoxy-D-xylulose 5-phosphate; it reads DH. R23 contacts 3-amino-2-oxopropyl phosphate. The active-site Proton acceptor is the H48. R50 and H55 together coordinate 1-deoxy-D-xylulose 5-phosphate. E75 acts as the Proton acceptor in catalysis. T105 contributes to the 1-deoxy-D-xylulose 5-phosphate binding site. The active-site Proton donor is the H196. Residues G197 and 218–219 contribute to the 3-amino-2-oxopropyl phosphate site; that span reads GH.

Belongs to the PNP synthase family. Homooctamer; tetramer of dimers.

Its subcellular location is the cytoplasm. It carries out the reaction 3-amino-2-oxopropyl phosphate + 1-deoxy-D-xylulose 5-phosphate = pyridoxine 5'-phosphate + phosphate + 2 H2O + H(+). Its pathway is cofactor biosynthesis; pyridoxine 5'-phosphate biosynthesis; pyridoxine 5'-phosphate from D-erythrose 4-phosphate: step 5/5. Functionally, catalyzes the complicated ring closure reaction between the two acyclic compounds 1-deoxy-D-xylulose-5-phosphate (DXP) and 3-amino-2-oxopropyl phosphate (1-amino-acetone-3-phosphate or AAP) to form pyridoxine 5'-phosphate (PNP) and inorganic phosphate. The protein is Pyridoxine 5'-phosphate synthase of Pseudomonas putida (strain ATCC 47054 / DSM 6125 / CFBP 8728 / NCIMB 11950 / KT2440).